Here is a 92-residue protein sequence, read N- to C-terminus: MKMILDLDTGIDDAFALAYAIAHPGIDLIGVTGTYGNVTIEQGMANTQALLTLLGAADVPVYAGRAIDGFEVSEASARIHGRNGVGEVDIAA.

The protein belongs to the IUNH family.

This is an uncharacterized protein from Corynebacterium ammoniagenes (Brevibacterium ammoniagenes).